Here is a 325-residue protein sequence, read N- to C-terminus: ATP-dependent (S)-NAD(P)H-hydrate dehydratase (325 aa).

A YjeF C-terminal domain is found at 9 to 315; the sequence is LLKKVYNMVP…EHVHTAFLNV (307 aa). (6S)-NADPHX is bound by residues Gly119 and 172–178; that span reads NVVEFGR. ATP-binding positions include 211-215 and 230-239; these read KGAKD and GGLKRSGGQG. Asp240 serves as a coordination point for (6S)-NADPHX.

Belongs to the NnrD/CARKD family. Mg(2+) is required as a cofactor.

It localises to the cytoplasm. The catalysed reaction is (6S)-NADHX + ATP = ADP + phosphate + NADH + H(+). It carries out the reaction (6S)-NADPHX + ATP = ADP + phosphate + NADPH + H(+). Catalyzes the dehydration of the S-form of NAD(P)HX at the expense of ATP, which is converted to ADP. Together with NAD(P)HX epimerase, which catalyzes the epimerization of the S- and R-forms, the enzyme allows the repair of both epimers of NAD(P)HX, a damaged form of NAD(P)H that is a result of enzymatic or heat-dependent hydration. In Phaeosphaeria nodorum (strain SN15 / ATCC MYA-4574 / FGSC 10173) (Glume blotch fungus), this protein is ATP-dependent (S)-NAD(P)H-hydrate dehydratase.